Here is a 306-residue protein sequence, read N- to C-terminus: Pentalenolactone F synthase (306 aa).

Histidine 110 and aspartate 112 together coordinate Fe cation. 2 residues coordinate 2-oxoglutarate: threonine 138 and tryptophan 258. Position 273 (histidine 273) interacts with Fe cation. Arginine 284 is a binding site for 2-oxoglutarate.

The protein belongs to the TfdA dioxygenase family. Requires Fe(2+) as cofactor.

The catalysed reaction is pentalenolactone D + 2 2-oxoglutarate + 2 O2 = pentalenolactone F + 2 succinate + 2 CO2 + H2O. The protein operates within antibiotic biosynthesis; neopentalenolactone biosynthesis. With respect to regulation, activated by ascorbate. In terms of biological role, catalyzes the Fe(2+) and alpha-ketoglutarate-dependent oxidation of pentalenolactone D to pentalenolactone F. Also able to catalyze the oxidation of pentalenolactone D to pentalenolactone E. In presence of neopentalenolactone D, mediates production of PL308 and possibly neopentalenolactone E. The chain is Pentalenolactone F synthase (ptlD) from Streptomyces avermitilis (strain ATCC 31267 / DSM 46492 / JCM 5070 / NBRC 14893 / NCIMB 12804 / NRRL 8165 / MA-4680).